Consider the following 1153-residue polypeptide: Probable RNA-dependent RNA polymerase 3 (1153 aa).

Belongs to the RdRP family. As to expression, expressed in shoot apical meristem (SAM) and panicles.

It carries out the reaction RNA(n) + a ribonucleoside 5'-triphosphate = RNA(n+1) + diphosphate. Its function is as follows. Probably involved in the RNA silencing pathway and required for the generation of small interfering RNAs (siRNAs). This Oryza sativa subsp. japonica (Rice) protein is Probable RNA-dependent RNA polymerase 3 (RDR3).